The chain runs to 605 residues: Aspartate--tRNA(Asp/Asn) ligase (605 aa).

An L-aspartate-binding site is contributed by E176. The interval 200–203 (QQFK) is aspartate. 2 residues coordinate L-aspartate: R222 and H452. 222–224 (RDE) is an ATP binding site. ATP is bound at residue E490. R497 contributes to the L-aspartate binding site. Residue 542-545 (GIDR) participates in ATP binding.

This sequence belongs to the class-II aminoacyl-tRNA synthetase family. Type 1 subfamily. Homodimer.

Its subcellular location is the cytoplasm. It catalyses the reaction tRNA(Asx) + L-aspartate + ATP = L-aspartyl-tRNA(Asx) + AMP + diphosphate. In terms of biological role, aspartyl-tRNA synthetase with relaxed tRNA specificity since it is able to aspartylate not only its cognate tRNA(Asp) but also tRNA(Asn). Reaction proceeds in two steps: L-aspartate is first activated by ATP to form Asp-AMP and then transferred to the acceptor end of tRNA(Asp/Asn). The sequence is that of Aspartate--tRNA(Asp/Asn) ligase from Rickettsia prowazekii (strain Madrid E).